Here is a 423-residue protein sequence, read N- to C-terminus: Glucose-1-phosphate adenylyltransferase (423 aa).

Residues Y108, G173, 188–189, and S207 each bind alpha-D-glucose 1-phosphate; that span reads EK.

This sequence belongs to the bacterial/plant glucose-1-phosphate adenylyltransferase family. Homotetramer.

The enzyme catalyses alpha-D-glucose 1-phosphate + ATP + H(+) = ADP-alpha-D-glucose + diphosphate. The protein operates within glycan biosynthesis; glycogen biosynthesis. Functionally, involved in the biosynthesis of ADP-glucose, a building block required for the elongation reactions to produce glycogen. Catalyzes the reaction between ATP and alpha-D-glucose 1-phosphate (G1P) to produce pyrophosphate and ADP-Glc. This Francisella tularensis subsp. mediasiatica (strain FSC147) protein is Glucose-1-phosphate adenylyltransferase.